The following is a 394-amino-acid chain: 1-deoxy-D-xylulose 5-phosphate reductoisomerase (394 aa).

NADPH contacts are provided by Thr12, Gly13, Ser14, Ile15, Gly38, and Asn126. Lys127 provides a ligand contact to 1-deoxy-D-xylulose 5-phosphate. An NADPH-binding site is contributed by Glu128. Asp151 is a Mn(2+) binding site. The 1-deoxy-D-xylulose 5-phosphate site is built by Ser152, Glu153, Ser177, and His200. Glu153 provides a ligand contact to Mn(2+). Gly206 lines the NADPH pocket. The 1-deoxy-D-xylulose 5-phosphate site is built by Ser213, Asn218, Lys219, and Glu222. Position 222 (Glu222) interacts with Mn(2+).

It belongs to the DXR family. Mg(2+) is required as a cofactor. It depends on Mn(2+) as a cofactor.

It carries out the reaction 2-C-methyl-D-erythritol 4-phosphate + NADP(+) = 1-deoxy-D-xylulose 5-phosphate + NADPH + H(+). The protein operates within isoprenoid biosynthesis; isopentenyl diphosphate biosynthesis via DXP pathway; isopentenyl diphosphate from 1-deoxy-D-xylulose 5-phosphate: step 1/6. Functionally, catalyzes the NADPH-dependent rearrangement and reduction of 1-deoxy-D-xylulose-5-phosphate (DXP) to 2-C-methyl-D-erythritol 4-phosphate (MEP). In Beutenbergia cavernae (strain ATCC BAA-8 / DSM 12333 / CCUG 43141 / JCM 11478 / NBRC 16432 / NCIMB 13614 / HKI 0122), this protein is 1-deoxy-D-xylulose 5-phosphate reductoisomerase.